Consider the following 196-residue polypeptide: Imidazoleglycerol-phosphate dehydratase (196 aa).

Belongs to the imidazoleglycerol-phosphate dehydratase family.

Its subcellular location is the cytoplasm. It catalyses the reaction D-erythro-1-(imidazol-4-yl)glycerol 3-phosphate = 3-(imidazol-4-yl)-2-oxopropyl phosphate + H2O. It functions in the pathway amino-acid biosynthesis; L-histidine biosynthesis; L-histidine from 5-phospho-alpha-D-ribose 1-diphosphate: step 6/9. This Clostridium botulinum (strain Langeland / NCTC 10281 / Type F) protein is Imidazoleglycerol-phosphate dehydratase.